We begin with the raw amino-acid sequence, 247 residues long: Phosphoglycerate mutase 1 (247 aa).

Substrate-binding positions include 8–15 and 21–22; these read RHGQSEWN and TG. Catalysis depends on His-9, which acts as the Tele-phosphohistidine intermediate. Ser-12 is modified (phosphoserine). Lys-31 participates in a covalent cross-link: Glycyl lysine isopeptide (Lys-Gly) (interchain with G-Cter in ubiquitin). Tyr-49 is modified (phosphotyrosine). A Glycyl lysine isopeptide (Lys-Gly) (interchain with G-Cter in ubiquitin) cross-link involves residue Lys-57. Arg-60 provides a ligand contact to substrate. Residue Lys-71 forms a Glycyl lysine isopeptide (Lys-Gly) (interchain with G-Cter in ubiquitin) linkage. The active-site Proton donor/acceptor is Glu-87. Residues 87 to 90, Lys-98, and 114 to 115 contribute to the substrate site; these read ERHY and RR. Ser-116, Ser-127, and Ser-128 each carry phosphoserine. Glycyl lysine isopeptide (Lys-Gly) (interchain with G-Cter in ubiquitin) cross-links involve residues Lys-139 and Lys-175. 183–184 provides a ligand contact to substrate; that stretch reads GN. Ser-185 bears the Phosphoserine mark. Residue Lys-191 forms a Glycyl lysine isopeptide (Lys-Gly) (interchain with G-Cter in ubiquitin) linkage. Phosphoserine is present on Ser-197.

This sequence belongs to the phosphoglycerate mutase family. BPG-dependent PGAM subfamily. In terms of assembly, homotetramer: dimer of dimers.

Its subcellular location is the cytoplasm. The protein localises to the mitochondrion outer membrane. The protein resides in the mitochondrion intermembrane space. The catalysed reaction is (2R)-2-phosphoglycerate = (2R)-3-phosphoglycerate. It participates in carbohydrate degradation; glycolysis; pyruvate from D-glyceraldehyde 3-phosphate: step 3/5. Its activity is regulated as follows. Inhibited by inositol hexakisphosphate and benzene tri-, tetra- and hexacarboxylates. Functionally, interconversion of 3- and 2-phosphoglycerate with 2,3-bisphosphoglycerate as the primer of the reaction. Can also catalyze the reaction of EC 5.4.2.4 (synthase), but with a reduced activity. This is Phosphoglycerate mutase 1 (GPM1) from Saccharomyces cerevisiae (strain ATCC 204508 / S288c) (Baker's yeast).